Reading from the N-terminus, the 90-residue chain is Acylphosphatase (90 aa).

In terms of domain architecture, Acylphosphatase-like spans 4 to 90 (CVRVRVSGRV…KGHDDFKIIY (87 aa)). Residues Arg-19 and Asn-37 contribute to the active site.

This sequence belongs to the acylphosphatase family.

It catalyses the reaction an acyl phosphate + H2O = a carboxylate + phosphate + H(+). This chain is Acylphosphatase (acyP), found in Methanothrix thermoacetophila (strain DSM 6194 / JCM 14653 / NBRC 101360 / PT) (Methanosaeta thermophila).